The following is a 156-amino-acid chain: Small ribosomal subunit protein uS7 (156 aa).

This sequence belongs to the universal ribosomal protein uS7 family. Part of the 30S ribosomal subunit. Contacts proteins S9 and S11.

Functionally, one of the primary rRNA binding proteins, it binds directly to 16S rRNA where it nucleates assembly of the head domain of the 30S subunit. Is located at the subunit interface close to the decoding center, probably blocks exit of the E-site tRNA. The sequence is that of Small ribosomal subunit protein uS7 from Rhodopseudomonas palustris (strain BisB5).